A 185-amino-acid chain; its full sequence is MLRAATNLYSPPNTGKMSPKTIGSDVGIEVIPVMTGTFLSGAMMSLFLLTIPVILETTTVPSQLLNQWHRIFYRGHIQGPLISIATGLLYSYAAYQRSQRGAAWKPFAVSAAVTVAMIPFTWVFMANVNNSLFRAVAVTEKGGEGNWNEAQGLVRSWGAWNAVRALFPLSGAVLGLLSTCKIVSF.

The next 3 membrane-spanning stretches (helical) occupy residues 35 to 55, 75 to 95, and 106 to 126; these read TGTF…PVIL, GHIQ…YAAY, and PFAV…VFMA. The N-linked (GlcNAc...) asparagine glycan is linked to Asn-129. A helical membrane pass occupies residues 165–185; the sequence is ALFPLSGAVLGLLSTCKIVSF.

It belongs to the anthrone oxygenase family.

It is found in the membrane. It participates in mycotoxin biosynthesis. Functionally, monooxygenase; part of the fragmented gene cluster that mediates the biosynthesis of dothistromin (DOTH), a polyketide toxin very similar in structure to the aflatoxin precursor, versicolorin B. The first step of the pathway is the conversion of acetate to norsolorinic acid (NOR) and requires the fatty acid synthase subunits hexA and hexB, as well as the polyketide synthase pksA. PksA combines a hexanoyl starter unit and 7 malonyl-CoA extender units to synthesize the precursor NOR. The hexanoyl starter unit is provided to the acyl-carrier protein (ACP) domain by the fungal fatty acid synthase hexA/hexB. The second step is the conversion of NOR to averantin (AVN) and requires the norsolorinic acid ketoreductase nor1, which catalyzes the dehydration of norsolorinic acid to form (1'S)-averantin. The cytochrome P450 monooxygenase avnA then catalyzes the hydroxylation of AVN to 5'hydroxyaverantin (HAVN). The next step is performed by adhA that transforms HAVN to averufin (AVF). Averufin might then be converted to hydroxyversicolorone by cypX and avfA. Hydroxyversicolorone is further converted versiconal hemiacetal acetate (VHA) by moxY. VHA is then the substrate for the versiconal hemiacetal acetate esterase est1 to yield versiconal (VAL). Versicolorin B synthase vbsA then converts VAL to versicolorin B (VERB) by closing the bisfuran ring. Then, the activity of the versicolorin B desaturase verB leads to versicolorin A (VERA). DotB, a predicted chloroperoxidase, may perform epoxidation of the A-ring of VERA. Alternatively, a cytochrome P450, such as cypX or avnA could catalyze this step. It is also possible that another, uncharacterized, cytochrome P450 enzyme is responsible for this step. Opening of the epoxide could potentially be achieved by the epoxide hydrolase epoA. However, epoA seems not to be required for DOTH biosynthesis, but other epoxide hydrolases may have the ability to complement this hydrolysis. Alternatively, opening of the epoxide ring could be achieved non-enzymatically. The next step is the deoxygenation of ring A to yield the 5,8-dihydroxyanthraquinone which is most likely catalyzed by the NADPH dehydrogenase encoded by ver1. The last stages of DOTH biosynthesis are proposed to involve hydroxylation of the bisfuran. OrdB and norB might have oxidative roles here. An alternative possibility is that cytochrome P450 monoogenases such as avnA and cypX might perform these steps in addition to previously proposed steps. In Dothistroma septosporum (strain NZE10 / CBS 128990) (Red band needle blight fungus), this protein is Monooxygenase hypC.